A 700-amino-acid chain; its full sequence is Polyphosphate kinase (700 aa).

Asn45 is an ATP binding site. Mg(2+) contacts are provided by Arg373 and Arg403. Positions 428–462 constitute a PLD phosphodiesterase 1 domain; that stretch reads PGMKIHAKLLLITRREEQGFVRYAHIGTGNFHERT. The active-site Phosphohistidine intermediate is His433. Residues Tyr466, Arg562, and His590 each contribute to the ATP site. The 31-residue stretch at 585–615 folds into the PLD phosphodiesterase 2 domain; it reads DRFLEHPRVLVVHNDGDPQVFISSADWMERN.

The protein belongs to the polyphosphate kinase 1 (PPK1) family. It depends on Mg(2+) as a cofactor. An intermediate of this reaction is the autophosphorylated ppk in which a phosphate is covalently linked to a histidine residue through a N-P bond.

The enzyme catalyses [phosphate](n) + ATP = [phosphate](n+1) + ADP. Functionally, catalyzes the reversible transfer of the terminal phosphate of ATP to form a long-chain polyphosphate (polyP). The sequence is that of Polyphosphate kinase from Vibrio vulnificus (strain YJ016).